Consider the following 287-residue polypeptide: Urease accessory protein UreD (287 aa).

It belongs to the UreD family. UreD, UreF and UreG form a complex that acts as a GTP-hydrolysis-dependent molecular chaperone, activating the urease apoprotein by helping to assemble the nickel containing metallocenter of UreC. The UreE protein probably delivers the nickel.

Its subcellular location is the cytoplasm. In terms of biological role, required for maturation of urease via the functional incorporation of the urease nickel metallocenter. This chain is Urease accessory protein UreD, found in Ureaplasma parvum serovar 3 (strain ATCC 27815 / 27 / NCTC 11736).